A 314-amino-acid polypeptide reads, in one-letter code: Putative S-adenosyl-L-methionine-dependent methyltransferase MMAR_5323 (314 aa).

S-adenosyl-L-methionine contacts are provided by residues aspartate 132 and 161–162 (DL).

It belongs to the UPF0677 family.

Functionally, exhibits S-adenosyl-L-methionine-dependent methyltransferase activity. In Mycobacterium marinum (strain ATCC BAA-535 / M), this protein is Putative S-adenosyl-L-methionine-dependent methyltransferase MMAR_5323.